We begin with the raw amino-acid sequence, 95 residues long: Small ribosomal subunit protein bS6 (95 aa).

This sequence belongs to the bacterial ribosomal protein bS6 family.

In terms of biological role, binds together with bS18 to 16S ribosomal RNA. This is Small ribosomal subunit protein bS6 from Rhodococcus jostii (strain RHA1).